We begin with the raw amino-acid sequence, 446 residues long: Lysine histidine transporter 1 (446 aa).

Residues 1–37 (MVAQAPHDDHQDDEKLAAARQKEIEDWLPITSSRNAK) are Cytoplasmic-facing. The helical transmembrane segment at 38 to 58 (WWYSAFHNVTAMVGAGVLGLP) threads the bilayer. At 59–63 (YAMSQ) the chain is on the extracellular side. A helical transmembrane segment spans residues 64–84 (LGWGPGIAVLVLSWVITLYTL). The Cytoplasmic segment spans residues 85-115 (WQMVEMHEMVPGKRFDRYHELGQHAFGEKLG). A helical transmembrane segment spans residues 116–136 (LYIVVPQQLIVEIGVCIVYMV). The Extracellular portion of the chain corresponds to 137–157 (TGGKSLKKFHELVCDDCKPIK). A helical transmembrane segment spans residues 158-178 (LTYFIMIFASVHFVLSHLPNF). At 179–180 (NS) the chain is on the cytoplasmic side. Residues 181 to 201 (ISGVSLAAAVMSLSYSTIAWA) form a helical membrane-spanning segment. The Extracellular portion of the chain corresponds to 202–227 (SSASKGVQEDVQYGYKAKTTAGTVFN). The helical transmembrane segment at 228–248 (FFSGLGDVAFAYAGHNVVLEI) threads the bilayer. Residues 249 to 268 (QATIPSTPEKPSKGPMWRGV) are Cytoplasmic-facing. Residues 269–289 (IVAYIVVALCYFPVALVGYYI) form a helical membrane-spanning segment. Over 290 to 305 (FGNGVEDNILMSLKKP) the chain is Extracellular. A helical membrane pass occupies residues 306–326 (AWLIATANIFVVIHVIGSYQI). The Cytoplasmic segment spans residues 327–352 (YAMPVFDMMETLLVKKLNFRPTTTLR). Residues 353 to 375 (FFVRNFYVAATMFVGMTFPFFGG) traverse the membrane as a helical segment. Topologically, residues 376–378 (LLA) are extracellular. Residues 379-401 (FFGGFAFAPTTYFLPCVIWLAIY) form a helical membrane-spanning segment. The Cytoplasmic segment spans residues 402 to 409 (KPKKYSLS). A helical membrane pass occupies residues 410–430 (WWANWVCIVFGLFLMVLSPIG). Over 431–446 (GLRTIVIQAKGYKFYS) the chain is Extracellular.

It belongs to the amino acid/polyamine transporter 2 family. Amino acid/auxin permease (AAAP) (TC 2.A.18.2) subfamily. In terms of tissue distribution, expressed in roots, stems, flowers, leaves, siliques and pollen. Found in the tips of roots and in the rhizodermis of emerging roots and in lateral roots. Higher expression in older leaves as compared to joung leaves. Detected first at the hydathodes, then in the epidermis and finally in matures leaves in all mesophyll cells. Not detected in vascular bundles or in seeds.

It localises to the cell membrane. Its activity is regulated as follows. Inhibited by carbonlycyanide m-chlorophenylhydrazone (CCCP) and DEPC. Functionally, amino acid-proton symporter. Transporter with a broad specificity for histidine, lysine, glutamic acid, alanine, serine, proline and glycine. Involved in both apoplastic transport of amino acids in leaves and their uptake by roots. This chain is Lysine histidine transporter 1 (LHT1), found in Arabidopsis thaliana (Mouse-ear cress).